The sequence spans 239 residues: 1-(5-phosphoribosyl)-5-[(5-phosphoribosylamino)methylideneamino] imidazole-4-carboxamide isomerase (239 aa).

D8 serves as the catalytic Proton acceptor. D129 acts as the Proton donor in catalysis.

The protein belongs to the HisA/HisF family.

The protein resides in the cytoplasm. The catalysed reaction is 1-(5-phospho-beta-D-ribosyl)-5-[(5-phospho-beta-D-ribosylamino)methylideneamino]imidazole-4-carboxamide = 5-[(5-phospho-1-deoxy-D-ribulos-1-ylimino)methylamino]-1-(5-phospho-beta-D-ribosyl)imidazole-4-carboxamide. It functions in the pathway amino-acid biosynthesis; L-histidine biosynthesis; L-histidine from 5-phospho-alpha-D-ribose 1-diphosphate: step 4/9. This chain is 1-(5-phosphoribosyl)-5-[(5-phosphoribosylamino)methylideneamino] imidazole-4-carboxamide isomerase, found in Bacillus mycoides (strain KBAB4) (Bacillus weihenstephanensis).